The chain runs to 207 residues: Twist-related protein 1 (207 aa).

Low complexity predominate over residues 1–18 (MMQDVSSSPVSPADDSLS). Residues 1–110 (MMQDVSSSPV…GGGSPQSYEE (110 aa)) form a disordered region. The span at 34–43 (RGGRKRRSSR) shows a compositional bias: basic residues. Gly residues-rich tracts occupy residues 46–65 (AGGGAGPGGAAGGGVGGGDE) and 80–104 (GCGGGGSAGGGGGGGGGGSSSGGGS). One can recognise a bHLH domain in the interval 113-164 (TQRVMANVRERQRTQSLNEAFAALRKIIPTLPSDKLSKIQTLKLAARYIDFL). Residues 166–196 (QVLQSDELDSKMASCSYVAHERLSYAFSVWR) form a sufficient for transactivation activity region.

As to quaternary structure, efficient DNA binding requires dimerization with another bHLH protein. Homodimer or heterodimer with E proteins such as TCF3. ID1 binds preferentially to TCF3 but does not interact efficiently with TWIST1 so ID1 levels control the amount of TCF3 available to dimerize with TWIST and thus determine the type of dimer formed.

It localises to the nucleus. Acts as a transcriptional regulator. Inhibits myogenesis by sequestrating E proteins, inhibiting trans-activation by MEF2, and inhibiting DNA-binding by MYOD1 through physical interaction. This interaction probably involves the basic domains of both proteins. Also represses expression of pro-inflammatory cytokines such as TNFA and IL1B. Regulates cranial suture patterning and fusion. Activates transcription as a heterodimer with E proteins. Regulates gene expression differentially, depending on dimer composition. Homodimers induce expression of FGFR2 and POSTN while heterodimers repress FGFR2 and POSTN expression and induce THBS1 expression. Heterodimerization is also required for osteoblast differentiation. Represses the activity of the circadian transcriptional activator: NPAS2-BMAL1 heterodimer. This Cebus capucinus (White-faced sapajou) protein is Twist-related protein 1 (TWIST1).